The following is a 419-amino-acid chain: Acyl-coenzyme A thioesterase 1 (419 aa).

Active-site charge relay system residues include Ser-232, Asp-324, and His-358. A Phosphoserine modification is found at Ser-416.

Belongs to the C/M/P thioester hydrolase family. In terms of assembly, monomer. Expressed in liver.

The protein localises to the cytoplasm. Its subcellular location is the cytosol. It carries out the reaction hexadecanoyl-CoA + H2O = hexadecanoate + CoA + H(+). The catalysed reaction is dodecanoyl-CoA + H2O = dodecanoate + CoA + H(+). The enzyme catalyses tetradecanoyl-CoA + H2O = tetradecanoate + CoA + H(+). It catalyses the reaction decanoyl-CoA + H2O = decanoate + CoA + H(+). It carries out the reaction octadecanoyl-CoA + H2O = octadecanoate + CoA + H(+). The catalysed reaction is eicosanoyl-CoA + H2O = eicosanoate + CoA + H(+). The enzyme catalyses (9Z)-octadecenoyl-CoA + H2O = (9Z)-octadecenoate + CoA + H(+). It catalyses the reaction (9Z)-hexadecenoyl-CoA + H2O = (9Z)-hexadecenoate + CoA + H(+). It carries out the reaction (9E)-octadecenoyl-CoA + H2O = (9E)-octadecenoate + CoA + H(+). The protein operates within lipid metabolism; fatty acid metabolism. Catalyzes the hydrolysis of acyl-CoAs into free fatty acids and coenzyme A (CoASH), regulating their respective intracellular levels. More active towards saturated and unsaturated long chain fatty acyl-CoAs (C12-C20). The chain is Acyl-coenzyme A thioesterase 1 (Acot1) from Rattus norvegicus (Rat).